The sequence spans 94 residues: UPF0235 protein Dred_0717 (94 aa).

The protein belongs to the UPF0235 family.

The polypeptide is UPF0235 protein Dred_0717 (Desulforamulus reducens (strain ATCC BAA-1160 / DSM 100696 / MI-1) (Desulfotomaculum reducens)).